A 169-amino-acid chain; its full sequence is Crossover junction endodeoxyribonuclease RuvC (169 aa).

Catalysis depends on residues aspartate 11, glutamate 71, and aspartate 143. Mg(2+) contacts are provided by aspartate 11, glutamate 71, and aspartate 143.

It belongs to the RuvC family. Homodimer which binds Holliday junction (HJ) DNA. The HJ becomes 2-fold symmetrical on binding to RuvC with unstacked arms; it has a different conformation from HJ DNA in complex with RuvA. In the full resolvosome a probable DNA-RuvA(4)-RuvB(12)-RuvC(2) complex forms which resolves the HJ. Mg(2+) serves as cofactor.

The protein localises to the cytoplasm. The catalysed reaction is Endonucleolytic cleavage at a junction such as a reciprocal single-stranded crossover between two homologous DNA duplexes (Holliday junction).. The RuvA-RuvB-RuvC complex processes Holliday junction (HJ) DNA during genetic recombination and DNA repair. Endonuclease that resolves HJ intermediates. Cleaves cruciform DNA by making single-stranded nicks across the HJ at symmetrical positions within the homologous arms, yielding a 5'-phosphate and a 3'-hydroxyl group; requires a central core of homology in the junction. The consensus cleavage sequence is 5'-(A/T)TT(C/G)-3'. Cleavage occurs on the 3'-side of the TT dinucleotide at the point of strand exchange. HJ branch migration catalyzed by RuvA-RuvB allows RuvC to scan DNA until it finds its consensus sequence, where it cleaves and resolves the cruciform DNA. This chain is Crossover junction endodeoxyribonuclease RuvC, found in Rhizobium leguminosarum bv. trifolii (strain WSM2304).